The following is a 284-amino-acid chain: D-tagatose-1,6-bisphosphate aldolase subunit GatY (284 aa).

The active-site Proton donor is Asp82. Zn(2+) contacts are provided by His83 and His180. Gly181 serves as a coordination point for dihydroxyacetone phosphate. His208 lines the Zn(2+) pocket. Dihydroxyacetone phosphate-binding positions include 209–211 and 230–233; these read GAS and NVAT.

Belongs to the class II fructose-bisphosphate aldolase family. TagBP aldolase GatY subfamily. As to quaternary structure, forms a complex with GatZ. Requires Zn(2+) as cofactor.

The catalysed reaction is D-tagatofuranose 1,6-bisphosphate = D-glyceraldehyde 3-phosphate + dihydroxyacetone phosphate. Its pathway is carbohydrate metabolism; D-tagatose 6-phosphate degradation; D-glyceraldehyde 3-phosphate and glycerone phosphate from D-tagatose 6-phosphate: step 2/2. Its function is as follows. Catalytic subunit of the tagatose-1,6-bisphosphate aldolase GatYZ, which catalyzes the reversible aldol condensation of dihydroxyacetone phosphate (DHAP or glycerone-phosphate) with glyceraldehyde 3-phosphate (G3P) to produce tagatose 1,6-bisphosphate (TBP). Requires GatZ subunit for full activity and stability. Is involved in the catabolism of galactitol. The sequence is that of D-tagatose-1,6-bisphosphate aldolase subunit GatY from Shigella sonnei (strain Ss046).